Consider the following 1373-residue polypeptide: Disease resistance protein RRS1 (1373 aa).

In terms of domain architecture, TIR spans 5–146; that stretch reads EKDEEFVCIS…EIVRDVYETH (142 aa). Residues 170 to 421 form the NB-ARC domain; sequence IGIRCVGIWG…LLEGCGFFPH (252 aa). 179-186 contributes to the ATP binding site; sequence GMPGIGKT. 9 LRR repeats span residues 498–522, 535–553, 554–575, 577–598, 621–646, 665–688, 742–766, 768–793, and 831–854; these read SEEI…AFKN, NPEV…HSLP, NELR…NFDP, HLVE…TKNL, AENL…RLLR, PPNI…TVKP, LPNM…SIQG, PRFL…SLEI, and PRNL…PLSL. The short motif at 988 to 1005 is the Nuclear localization signal element; it reads RNFHCWAPGKVVPKVRKD. Positions 1204–1272 form a DNA-binding region, WRKY; it reads IPAIDEGDLW…YLSEHNHPRP (69 aa). A disordered region spans residues 1300 to 1323; sequence RVFQNKDEPNKPHLPSSSTPPGNA.

In terms of assembly, interacts with PopP2, a R.solanacearum type III effector.

The protein resides in the nucleus. In terms of biological role, transcription factor. Interacts specifically with the W box (5'-(T)TGAC[CT]-3'), a frequently occurring elicitor-responsive cis-acting element. Also acts as a disease resistance protein involved in resistance to fungal and bacterial pathogens, including R.solanacearum, P.syringae pv. tomato and C.higginsianum. The protein is Disease resistance protein RRS1 of Arabidopsis thaliana (Mouse-ear cress).